Reading from the N-terminus, the 314-residue chain is tRNA uridine(34) hydroxylase (314 aa).

In terms of domain architecture, Rhodanese spans 135-229 (ADPETLVIDT…YLEQIPAEES (95 aa)). The Cysteine persulfide intermediate role is filled by C189.

It belongs to the TrhO family.

It catalyses the reaction uridine(34) in tRNA + AH2 + O2 = 5-hydroxyuridine(34) in tRNA + A + H2O. Functionally, catalyzes oxygen-dependent 5-hydroxyuridine (ho5U) modification at position 34 in tRNAs. This Sinorhizobium fredii (strain NBRC 101917 / NGR234) protein is tRNA uridine(34) hydroxylase.